The chain runs to 349 residues: E3 ubiquitin-protein ligase rnf146 (349 aa).

Positions 1–21 are disordered; that stretch reads MASCGEVDHSVSSLPSSKKGS. Residues 10–21 show a composition bias toward low complexity; that stretch reads SVSSLPSSKKGS. The RING-type zinc finger occupies 41–79; that stretch reads CAICLQSCVHPVQLPCRHVFCFLCVKGASWQSKRCALCR. A WWE domain is found at 97-173; the sequence is ELKTGGRGAT…EHGRRRKIKR (77 aa). A glycoprotein contacts are provided by Y113, R116, W120, Y150, Q159, R169, and K181. 2 disordered regions span residues 226–251 and 264–349; these read TTVL…SPSL and DAPE…CTEV. Residues 283–292 are compositionally biased toward polar residues; that stretch reads SMSSSPNTYA. The span at 298–307 shows a compositional bias: acidic residues; that stretch reads WSDDEGDGEA. Over residues 308-317 the composition is skewed to basic and acidic residues; it reads VEPREQRLRL.

The protein localises to the cytoplasm. The protein resides in the cytosol. It localises to the nucleus. It catalyses the reaction S-ubiquitinyl-[E2 ubiquitin-conjugating enzyme]-L-cysteine + [acceptor protein]-L-lysine = [E2 ubiquitin-conjugating enzyme]-L-cysteine + N(6)-ubiquitinyl-[acceptor protein]-L-lysine.. It functions in the pathway protein modification; protein ubiquitination. In terms of biological role, E3 ubiquitin-protein ligase that specifically binds poly-ADP-ribosylated proteins and mediates their ubiquitination and subsequent degradation. May regulate many important biological processes, such as cell survival and DNA damage response. Acts as an activator of the Wnt signaling pathway by mediating the ubiquitination of poly-ADP-ribosylated proteins. Neuroprotective protein. Protects against cell death induced by DNA damaging agents and rescues cells from G1 arrest. Promotes cell survival after gamma-irradiation. Facilitates DNA repair. This is E3 ubiquitin-protein ligase rnf146 (rnf146) from Salmo salar (Atlantic salmon).